The chain runs to 426 residues: Delta-aminolevulinic acid dehydratase, chloroplastic (426 aa).

Residues M1–R45 constitute a chloroplast transit peptide. A disordered region spans residues G74–R107. K293 (schiff-base intermediate with substrate) is an active-site residue. Positions 303 and 315 each coordinate 5-aminolevulinate. A Mg(2+)-binding site is contributed by E331. K346 (schiff-base intermediate with substrate) is an active-site residue. 5-aminolevulinate is bound by residues S372 and Y411.

This sequence belongs to the ALAD family. As to quaternary structure, homooctamer. The cofactor is Mg(2+).

It localises to the plastid. The protein resides in the chloroplast. The catalysed reaction is 2 5-aminolevulinate = porphobilinogen + 2 H2O + H(+). The protein operates within porphyrin-containing compound metabolism; protoporphyrin-IX biosynthesis; coproporphyrinogen-III from 5-aminolevulinate: step 1/4. In terms of biological role, catalyzes an early step in the biosynthesis of tetrapyrroles. Binds two molecules of 5-aminolevulinate per subunit, each at a distinct site, and catalyzes their condensation to form porphobilinogen. The polypeptide is Delta-aminolevulinic acid dehydratase, chloroplastic (HEMB) (Oryza sativa subsp. japonica (Rice)).